We begin with the raw amino-acid sequence, 1485 residues long: DNA topoisomerase 2 (1485 aa).

Acidic residues predominate over residues 1-16 (MSIDADFSDYEDEASG). Residues 1 to 76 (MSIDADFSDY…NGNGNSNVST (76 aa)) form a disordered region. The span at 46 to 59 (DLRQTSLTSMTASE) shows a compositional bias: polar residues. The segment covering 64 to 76 (VTNNGNGNSNVST) has biased composition (low complexity). Residues Asn-136, Asn-165, 193–195 (SSN), and 206–213 (GRNGYGAK) each bind ATP. The interval 388-392 (KKENK) is interaction with DNA. ATP is bound at residue 421 to 423 (QTK). The 115-residue stretch at 499 to 613 (CVLILTEGDS…SLLQIPGFLI (115 aa)) folds into the Toprim domain. 3 residues coordinate Mg(2+): Glu-505, Asp-582, and Asp-584. The Topo IIA-type catalytic domain maps to 745-1195 (IPSVVDGLKP…TPKELWLHDL (451 aa)). Tyr-835 (O-(5'-phospho-DNA)-tyrosine intermediate) is an active-site residue. The interval 1019 to 1028 (KLSRTQATSN) is interaction with DNA. Residues 1216–1225 (EEQSSRDFVN) show a composition bias toward basic and acidic residues. The interval 1216-1485 (EEQSSRDFVN…EDVDDYDESD (270 aa)) is disordered. Over residues 1226 to 1242 (RTKKKPRGKSTGTRKPR) the composition is skewed to basic residues. Over residues 1260–1273 (ESKPSTTNRKQQTL) the composition is skewed to polar residues. Positions 1278-1307 (ASKEPEKSSDINIVKTEDNSHGLSVEENRI) are enriched in basic and acidic residues. A phosphoserine mark is found at Ser-1310 and Ser-1345. Over residues 1387 to 1396 (AKNKGKKASS) the composition is skewed to basic residues. Polar residues predominate over residues 1413–1425 (GSSSTPKASSTNA). Ser-1433 carries the post-translational modification Phosphoserine. Residues 1473 to 1485 (DNDEDVDDYDESD) are compositionally biased toward acidic residues.

It belongs to the type II topoisomerase family. In terms of assembly, homodimer. Requires Mg(2+) as cofactor. The cofactor is Mn(2+). Ca(2+) serves as cofactor. Post-translationally, phosphorylated at multiple sites at both extremities of the protein.

Its subcellular location is the nucleus. It catalyses the reaction ATP-dependent breakage, passage and rejoining of double-stranded DNA.. Control of topological states of DNA by transient breakage and subsequent rejoining of DNA strands. Topoisomerase II makes double-strand breaks. The sequence is that of DNA topoisomerase 2 (top2) from Schizosaccharomyces pombe (strain 972 / ATCC 24843) (Fission yeast).